The following is a 414-amino-acid chain: Alanine--glyoxylate aminotransferase (414 aa).

A mitochondrion-targeting transit peptide spans 1–23 (MFRMLAKASVTLGSRAAGWVRTM). Lys231 is modified (N6-(pyridoxal phosphate)lysine). Lys247 is modified (N6-acetyllysine; alternate). N6-succinyllysine; alternate is present on Lys247. Residue Lys256 is modified to N6-acetyllysine. Lys330 bears the N6-acetyllysine; alternate mark. Position 330 is an N6-succinyllysine; alternate (Lys330). Lys334 carries the N6-acetyllysine modification. Arg382 is a binding site for substrate. The short motif at 412–414 (NKL) is the Microbody targeting signal element.

The protein belongs to the class-V pyridoxal-phosphate-dependent aminotransferase family. As to quaternary structure, homodimer. Pyridoxal 5'-phosphate is required as a cofactor.

It is found in the peroxisome. The protein localises to the mitochondrion matrix. The enzyme catalyses L-serine + pyruvate = 3-hydroxypyruvate + L-alanine. The catalysed reaction is glyoxylate + L-alanine = glycine + pyruvate. In terms of biological role, catalyzes the transamination of glyoxylate to glycine and contributes to the glyoxylate detoxification. Its function is as follows. Catalyzes the transamination between L-serine and pyruvate and weakly contributes to gluconeogenesis from the L-serine metabolism. This chain is Alanine--glyoxylate aminotransferase, found in Mus musculus (Mouse).